Consider the following 418-residue polypeptide: Tyrosine--tRNA ligase (418 aa).

Tyr38 is a binding site for L-tyrosine. A 'HIGH' region motif is present at residues Cys43–Ser52. Positions 175 and 179 each coordinate L-tyrosine. Positions Lys235 to Thr239 match the 'KMSKS' region motif. Lys238 serves as a coordination point for ATP. One can recognise an S4 RNA-binding domain in the interval Leu348 to Val413.

The protein belongs to the class-I aminoacyl-tRNA synthetase family. TyrS type 1 subfamily. In terms of assembly, homodimer.

It is found in the cytoplasm. It carries out the reaction tRNA(Tyr) + L-tyrosine + ATP = L-tyrosyl-tRNA(Tyr) + AMP + diphosphate + H(+). Functionally, catalyzes the attachment of tyrosine to tRNA(Tyr) in a two-step reaction: tyrosine is first activated by ATP to form Tyr-AMP and then transferred to the acceptor end of tRNA(Tyr). This Ehrlichia ruminantium (strain Gardel) protein is Tyrosine--tRNA ligase.